Here is a 261-residue protein sequence, read N- to C-terminus: Potassium/proton antiporter CemA (261 aa).

The next 3 membrane-spanning stretches (helical) occupy residues 138–158 (IISH…YLIL), 184–204 (FLIL…GWEL), and 221–241 (IISG…KYWI).

It belongs to the CemA family.

The protein resides in the plastid. It localises to the chloroplast inner membrane. The catalysed reaction is K(+)(in) + H(+)(out) = K(+)(out) + H(+)(in). Contributes to K(+)/H(+) antiport activity by supporting proton efflux to control proton extrusion and homeostasis in chloroplasts in a light-dependent manner to modulate photosynthesis. Prevents excessive induction of non-photochemical quenching (NPQ) under continuous-light conditions. Indirectly promotes efficient inorganic carbon uptake into chloroplasts. This is Potassium/proton antiporter CemA from Pinus koraiensis (Korean pine).